The chain runs to 880 residues: Potassium/sodium hyperpolarization-activated cyclic nucleotide-gated channel 1 (880 aa).

Residues 1–80 form a disordered region; the sequence is MEGGGKPNSS…SAGGLEDAEG (80 aa). Topologically, residues 1–136 are cytoplasmic; sequence MEGGGKPNSS…WIIHSYSDFR (136 aa). The span at 8-34 shows a compositional bias: low complexity; the sequence is NSSSNSRDDGNSVFPAKAPATGAGPAA. The segment covering 62-71 has biased composition (gly residues); that stretch reads DGGGGGGEES. A helical membrane pass occupies residues 137–158; that stretch reads FYWDLIMLIMMVGNLVIIPVGI. Over 159–167 the chain is Extracellular; it reads TFFTEQTTT. Residues 168 to 188 form a helical membrane-spanning segment; the sequence is PWIIFNVASDTVFLLDLIMNF. The Cytoplasmic portion of the chain corresponds to 189-209; the sequence is RTGTVNEDSSEIILDPKVIKM. A helical membrane pass occupies residues 210-230; sequence NYLKSWFVVDFISSIPVDYIF. Residues 231 to 254 lie on the Extracellular side of the membrane; it reads LIVEKGMDSEVYKTARALRIVRFT. Residues 255-275 form a helical; Voltage-sensor membrane-spanning segment; the sequence is KILSLLRLLRLSRLIRYIHQW. The Cytoplasmic portion of the chain corresponds to 276-289; sequence EEIFHMTYDLASAV. A helical membrane pass occupies residues 290-312; the sequence is VRIFNLIGMMLLLCHWDGCLQFL. Over 313–338 the chain is Extracellular; the sequence is VPLLQDFPPDCWVSLNEMVNDSWGKQ. A glycan (N-linked (GlcNAc...) asparagine) is linked at Asn332. The segment at residues 339–360 is an intramembrane region (pore-forming); sequence YSYALFKAMSHMLCIGYGAQAP. The Selectivity filter signature appears at 352–356; sequence CIGYG. The Extracellular segment spans residues 361-365; the sequence is VSMSD. The chain crosses the membrane as a helical span at residues 366–386; sequence LWITMLSMIVGATCYAMFVGH. Over 387 to 880 the chain is Cytoplasmic; it reads ATALIQSLDS…AEKPRFASNL (494 aa). Residues Gly533, Glu534, Cys536, Arg543, Thr544, Arg584, and Arg587 each coordinate 3',5'-cyclic AMP. Residues 641-664 show a composition bias toward polar residues; sequence LNSTSSTATPTSRMRTQSPPVYTA. Disordered regions lie at residues 641–686, 718–786, and 835–880; these read LNST…QPSA, ASQL…LPHE, and MSSG…ASNL. 2 stretches are compositionally biased toward low complexity: residues 665–685 and 725–738; these read TSLSHSNLHSPSPSTQTPQPS and PQQQQQPQAPQTQP. Residues 760–770 are compositionally biased toward polar residues; it reads STQALPNTSLT. The span at 844–855 shows a compositional bias: pro residues; sequence RGVPPAPPPPAA. The span at 870 to 880 shows a compositional bias: basic and acidic residues; that stretch reads EAEKPRFASNL.

The protein belongs to the potassium channel HCN family. As to quaternary structure, homotetramer. Heterotetramer with HCN2. The potassium channel is composed of a homo- or heterotetrameric complex of pore-forming subunits. Interacts with KCNE2. Interacts with the SH3 domain of CSK. As to expression, detected in myocytes in heart sinoatrial node (SAN) and in brain, in particular in the granule cell layer and in Purkinje neuron bodies in the cerebellum.

It localises to the cell membrane. It carries out the reaction Na(+)(in) = Na(+)(out). The catalysed reaction is K(+)(in) = K(+)(out). Its activity is regulated as follows. Activated by cAMP. cAMP binding promotes tetramerization and formation of an active channel. Compared to other family members, cAMP has less stimulatory effect on HCN1 because part of the molecules already contain bound cAMP and form homotetramers when cAMP levels are low, this inherent tetramerization in HCN1 results in a weaker response to increased cAMP. In terms of biological role, hyperpolarization-activated ion channel that are permeable to sodium and potassium ions. Exhibits weak selectivity for potassium over sodium ions. Contributes to the native pacemaker currents in heart (If) and in neurons (Ih). Participates in cerebellar mechanisms of motor learning. May mediate responses to sour stimuli. This is Potassium/sodium hyperpolarization-activated cyclic nucleotide-gated channel 1 (HCN1) from Oryctolagus cuniculus (Rabbit).